Here is a 161-residue protein sequence, read N- to C-terminus: Ribonuclease H (161 aa).

The RNase H type-1 domain maps to 5–149 (EKLAIAAATD…VDAIAVAFSK (145 aa)). Mg(2+) contacts are provided by Asp14, Glu53, Asp78, and Asp141.

Belongs to the RNase H family. Monomer. Mg(2+) is required as a cofactor.

Its subcellular location is the cytoplasm. The catalysed reaction is Endonucleolytic cleavage to 5'-phosphomonoester.. Its function is as follows. Endonuclease that specifically degrades the RNA of RNA-DNA hybrids. The polypeptide is Ribonuclease H (Prochlorococcus marinus (strain NATL2A)).